The primary structure comprises 456 residues: Adenylosuccinate lyase (456 aa).

N(6)-(1,2-dicarboxyethyl)-AMP-binding positions include 15–16, 90–92, and 122–123; these read RY, NHD, and TS. Catalysis depends on H171, which acts as the Proton donor/acceptor. Residue Q248 participates in N(6)-(1,2-dicarboxyethyl)-AMP binding. The active-site Proton donor/acceptor is the S296. Residues S297, 302 to 304, N310, R336, and 341 to 345 contribute to the N(6)-(1,2-dicarboxyethyl)-AMP site; these read KVN and STVLR.

The protein belongs to the lyase 1 family. Adenylosuccinate lyase subfamily. As to quaternary structure, homotetramer. Residues from neighboring subunits contribute catalytic and substrate-binding residues to each active site.

The enzyme catalyses N(6)-(1,2-dicarboxyethyl)-AMP = fumarate + AMP. It carries out the reaction (2S)-2-[5-amino-1-(5-phospho-beta-D-ribosyl)imidazole-4-carboxamido]succinate = 5-amino-1-(5-phospho-beta-D-ribosyl)imidazole-4-carboxamide + fumarate. The protein operates within purine metabolism; AMP biosynthesis via de novo pathway; AMP from IMP: step 2/2. Its pathway is purine metabolism; IMP biosynthesis via de novo pathway; 5-amino-1-(5-phospho-D-ribosyl)imidazole-4-carboxamide from 5-amino-1-(5-phospho-D-ribosyl)imidazole-4-carboxylate: step 2/2. Its function is as follows. Catalyzes two reactions in de novo purine nucleotide biosynthesis. Catalyzes the breakdown of 5-aminoimidazole- (N-succinylocarboxamide) ribotide (SAICAR or 2-[5-amino-1-(5-phospho-beta-D-ribosyl)imidazole-4-carboxamido]succinate) to 5-aminoimidazole-4-carboxamide ribotide (AICAR or 5-amino-1-(5-phospho-beta-D-ribosyl)imidazole-4-carboxamide) and fumarate, and of adenylosuccinate (ADS or N(6)-(1,2-dicarboxyethyl)-AMP) to adenosine monophosphate (AMP) and fumarate. This Pseudomonas aeruginosa (strain ATCC 15692 / DSM 22644 / CIP 104116 / JCM 14847 / LMG 12228 / 1C / PRS 101 / PAO1) protein is Adenylosuccinate lyase (purB).